We begin with the raw amino-acid sequence, 342 residues long: S-adenosylmethionine:tRNA ribosyltransferase-isomerase (342 aa).

Belongs to the QueA family. As to quaternary structure, monomer.

It localises to the cytoplasm. It carries out the reaction 7-aminomethyl-7-carbaguanosine(34) in tRNA + S-adenosyl-L-methionine = epoxyqueuosine(34) in tRNA + adenine + L-methionine + 2 H(+). The protein operates within tRNA modification; tRNA-queuosine biosynthesis. Its function is as follows. Transfers and isomerizes the ribose moiety from AdoMet to the 7-aminomethyl group of 7-deazaguanine (preQ1-tRNA) to give epoxyqueuosine (oQ-tRNA). In Streptococcus pyogenes serotype M2 (strain MGAS10270), this protein is S-adenosylmethionine:tRNA ribosyltransferase-isomerase.